Here is a 93-residue protein sequence, read N- to C-terminus: Co-chaperonin GroES (93 aa).

This sequence belongs to the GroES chaperonin family. As to quaternary structure, heptamer of 7 subunits arranged in a ring. Interacts with the chaperonin GroEL.

The protein resides in the cytoplasm. Together with the chaperonin GroEL, plays an essential role in assisting protein folding. The GroEL-GroES system forms a nano-cage that allows encapsulation of the non-native substrate proteins and provides a physical environment optimized to promote and accelerate protein folding. GroES binds to the apical surface of the GroEL ring, thereby capping the opening of the GroEL channel. The protein is Co-chaperonin GroES of Streptococcus gordonii.